A 132-amino-acid chain; its full sequence is Large ribosomal subunit protein uL14 (132 aa).

This sequence belongs to the universal ribosomal protein uL14 family. As to quaternary structure, part of the 50S ribosomal subunit. Forms a cluster with proteins L3 and L24e, part of which may contact the 16S rRNA in 2 intersubunit bridges.

Binds to 23S rRNA. Forms part of two intersubunit bridges in the 70S ribosome. The sequence is that of Large ribosomal subunit protein uL14 from Methanosarcina acetivorans (strain ATCC 35395 / DSM 2834 / JCM 12185 / C2A).